The following is a 246-amino-acid chain: E3 ubiquitin-protein ligase MARCHF2 (246 aa).

The RING-CH-type zinc finger occupies 56–116 (DTPSDGPFCR…ELCHTEFAVE (61 aa)). Residues 56–116 (DTPSDGPFCR…ELCHTEFAVE (61 aa)) form a required for inhibition of HIV-1 virus production and VSV G protein expression region. Zn(2+) contacts are provided by Cys64, Cys67, Cys80, Cys82, His90, Cys93, Cys106, and Cys109. The segment at 121 to 246 (PLTEWLKDPG…LKKVAEETPV (126 aa)) is required for interaction with IKBKG. 2 helical membrane passes run 138-158 (LCCD…SGWL) and 175-195 (AVGL…WTLV).

Interacts with STX6; the interaction promotes MARCHF2-mediated ubiquitination and degradation of CFTR. Interacts with MARCHF3. Interacts with GOPC/CAL; the interaction leads to CFTR ubiquitination and degradation. Interacts with CFTR; the interaction leads to CFTR ubiqtuitination and degradation. Interacts (via PDZ domain) with DLG1 (via PDZ domains); the interaction leads to DLG1 ubiqtuitination and degradation. Interacts with ERGIC3. Interacts with ADRB2. Interacts with IKBKG/NEMO; during the late stages of macrophage viral and bacterial infection; the interaction leads to ubiquitination and degradation of IKBKG/NEMO. Broadly expressed.

It localises to the endoplasmic reticulum membrane. Its subcellular location is the lysosome membrane. The protein localises to the endosome membrane. The protein resides in the golgi apparatus membrane. It is found in the cytoplasm. It localises to the cell membrane. The enzyme catalyses S-ubiquitinyl-[E2 ubiquitin-conjugating enzyme]-L-cysteine + [acceptor protein]-L-lysine = [E2 ubiquitin-conjugating enzyme]-L-cysteine + N(6)-ubiquitinyl-[acceptor protein]-L-lysine.. The protein operates within protein modification; protein ubiquitination. Its function is as follows. E3 ubiquitin-protein ligase that may mediate ubiquitination of TFRC and CD86, and promote their subsequent endocytosis and sorting to lysosomes via multivesicular bodies. E3 ubiquitin ligases accept ubiquitin from an E2 ubiquitin-conjugating enzyme in the form of a thioester and then directly transfer the ubiquitin to targeted substrates. Together with GOPC/CAL mediates the ubiquitination and lysosomal degradation of CFTR. Ubiquitinates and therefore mediates the degradation of DLG1. Regulates the intracellular trafficking and secretion of alpha1-antitrypsin/SERPINA1 and HP/haptoglobin via ubiquitination and degradation of the cargo receptor ERGIC3. Negatively regulates the antiviral and antibacterial immune response by repression of the NF-kB and type 1 IFN signaling pathways, via MARCHF2-mediated K48-linked polyubiquitination of IKBKG/NEMO, resulting in its proteasomal degradation. May be involved in endosomal trafficking through interaction with STX6. In terms of biological role, (Microbial infection) Positively regulates the degradation of Vesicular stomatitis virus (VSV) G protein via the lysosomal degradation pathway. Represses HIV-1 viral production and may inhibit the translocation of HIV-1 env to the cell surface, resulting in decreased viral cell-cell transmission. The polypeptide is E3 ubiquitin-protein ligase MARCHF2 (Homo sapiens (Human)).